The chain runs to 413 residues: Succinate--CoA ligase [ADP-forming] subunit beta, mitochondrial (413 aa).

A mitochondrion-targeting transit peptide spans 1-2; the sequence is RR. Residues 11–238 enclose the ATP-grasp domain; the sequence is MGLLQEAGIS…SNSAYRQKKI (228 aa). Residues Lys-48 and 55-57 each bind ATP; that span reads GRG. The Mg(2+) site is built by Asn-208 and Asp-222. Residues Asn-273 and 330-332 contribute to the substrate site; that span reads GIM.

The protein belongs to the succinate/malate CoA ligase beta subunit family. ATP-specific subunit beta subfamily. In terms of assembly, heterodimer of an alpha and a beta subunit. The beta subunit determines specificity for ATP. Mg(2+) serves as cofactor. Widely expressed. Not present in liver.

The protein resides in the mitochondrion. The catalysed reaction is succinate + ATP + CoA = succinyl-CoA + ADP + phosphate. The protein operates within carbohydrate metabolism; tricarboxylic acid cycle; succinate from succinyl-CoA (ligase route): step 1/1. Its function is as follows. ATP-specific succinyl-CoA synthetase functions in the citric acid cycle (TCA), coupling the hydrolysis of succinyl-CoA to the synthesis of ATP and thus represents the only step of substrate-level phosphorylation in the TCA. The beta subunit provides nucleotide specificity of the enzyme and binds the substrate succinate, while the binding sites for coenzyme A and phosphate are found in the alpha subunit. The polypeptide is Succinate--CoA ligase [ADP-forming] subunit beta, mitochondrial (Columba livia (Rock dove)).